The primary structure comprises 776 residues: MNKKILQILEYDKVKEQFMNALTTAQGQKELSDLVPLTDKDKIQLLFDEVADFRLLTQENGLLNLGKTNDLTEILRRLELEASLSGKEFVEIKKVIQLGINIQRFFDEAENVETPSLNITLEKLVDLSGLIKKLEIFDNAGSLYDNASLELMHIRSSIKSHQSEIRKIMQEMLTKNLASLSENVITIRNDRQVLPVKAENKNKIAGVVHDMSASGQTLYIEPNAVVSLNNKLNQKRIEERQEITRIYRELAEELKPYSFDIRQNAWLIGHIDFVRAKYLYLAANKASLPALTNDKDIILFAARHPLIDAKMVVANDIKFDRTLNTIVITGPNTGGKTITLKTVGLLTILAQSGLPILADDGSRIHLFDDIFADIGDEQSIEQSLSTFSSHMTNIVQILAQADENSLVLFDELGAGTDPKEGAALAIAILENLRKRNVKTMASTHYPELKAYGVKTQQVINASMEFNIDKMQPTYHLQLGVPGRSNALEISRRLGLPETIISEAGQQISGSEHDVNQMIEKLEEKTREVIESSRNIKKIERENQSLHKDLTKVYNQINRERDFELEKAQKEAQEVVKKASLEAQEILKNLNDKAALKPHEIIAARKELEGLAPTIDFSKNKVLKKAKAQRGLKQGAEVNVTSYGQRGKLIRLEKDGRWTVQMGSITTRLSEEEFEVIETPEQIQAKTKNVSKKVTSKVKAQLDLRGMRYEEAELELDNYIDQALLANLIQITIVHGIGTGVIREMVQKKLQKHRHIKSYEYAPINAGGSGATIAILK.

330-337 is a binding site for ATP; it reads GPNTGGKT. A Smr domain is found at 701-776; sequence LDLRGMRYEE…GSGATIAILK (76 aa).

It belongs to the DNA mismatch repair MutS family. MutS2 subfamily. In terms of assembly, homodimer. Binds to stalled ribosomes, contacting rRNA.

Its function is as follows. Endonuclease that is involved in the suppression of homologous recombination and thus may have a key role in the control of bacterial genetic diversity. Functionally, acts as a ribosome collision sensor, splitting the ribosome into its 2 subunits. Detects stalled/collided 70S ribosomes which it binds and splits by an ATP-hydrolysis driven conformational change. Acts upstream of the ribosome quality control system (RQC), a ribosome-associated complex that mediates the extraction of incompletely synthesized nascent chains from stalled ribosomes and their subsequent degradation. Probably generates substrates for RQC. This chain is Endonuclease MutS2, found in Lactococcus lactis subsp. cremoris (strain SK11).